A 416-amino-acid polypeptide reads, in one-letter code: Serine hydroxymethyltransferase (416 aa).

(6S)-5,6,7,8-tetrahydrofolate is bound by residues Leu-121 and 125–127 (GHL). At Lys-229 the chain carries N6-(pyridoxal phosphate)lysine. 354–356 (SPF) serves as a coordination point for (6S)-5,6,7,8-tetrahydrofolate.

The protein belongs to the SHMT family. In terms of assembly, homodimer. Pyridoxal 5'-phosphate serves as cofactor.

It is found in the cytoplasm. It catalyses the reaction (6R)-5,10-methylene-5,6,7,8-tetrahydrofolate + glycine + H2O = (6S)-5,6,7,8-tetrahydrofolate + L-serine. It functions in the pathway one-carbon metabolism; tetrahydrofolate interconversion. Its pathway is amino-acid biosynthesis; glycine biosynthesis; glycine from L-serine: step 1/1. Functionally, catalyzes the reversible interconversion of serine and glycine with tetrahydrofolate (THF) serving as the one-carbon carrier. This reaction serves as the major source of one-carbon groups required for the biosynthesis of purines, thymidylate, methionine, and other important biomolecules. Also exhibits THF-independent aldolase activity toward beta-hydroxyamino acids, producing glycine and aldehydes, via a retro-aldol mechanism. In Halorhodospira halophila (strain DSM 244 / SL1) (Ectothiorhodospira halophila (strain DSM 244 / SL1)), this protein is Serine hydroxymethyltransferase.